The following is a 369-amino-acid chain: 2-aminoethylphosphonate--pyruvate transaminase (369 aa).

Position 193 is an N6-(pyridoxal phosphate)lysine (Lys193).

It belongs to the class-V pyridoxal-phosphate-dependent aminotransferase family. PhnW subfamily. In terms of assembly, homodimer. Requires pyridoxal 5'-phosphate as cofactor.

The enzyme catalyses (2-aminoethyl)phosphonate + pyruvate = phosphonoacetaldehyde + L-alanine. Its function is as follows. Involved in phosphonate degradation. This chain is 2-aminoethylphosphonate--pyruvate transaminase, found in Burkholderia pseudomallei (strain 1106a).